The chain runs to 145 residues: uncharacterized protein (145 aa).

To B.subtilis XkdJ.

This is an uncharacterized protein from Bacillus subtilis (strain 168).